The primary structure comprises 329 residues: Isoaspartyl peptidase/L-asparaginase (329 aa).

T173 serves as the catalytic Nucleophile. Substrate contacts are provided by residues R201–D204 and T222–G225.

Belongs to the Ntn-hydrolase family. Heterotetramer of two alpha and two beta chains arranged as a dimer of alpha/beta heterodimers. Cleaved into an alpha and beta chain by autocatalysis; this activates the enzyme. The N-terminal residue of the beta subunit is responsible for the nucleophile hydrolase activity.

The enzyme catalyses Cleavage of a beta-linked Asp residue from the N-terminus of a polypeptide.. Functionally, degrades proteins damaged by L-isoaspartyl residue formation (also known as beta-Asp residues). Probably performs the final step in the degradation of the reserve polymer cyanophycin (depolymerizes the building block L-beta-Asp-Arg). Also has L-asparaginase activity. In Synechocystis sp. (strain ATCC 27184 / PCC 6803 / Kazusa), this protein is Isoaspartyl peptidase/L-asparaginase.